A 134-amino-acid polypeptide reads, in one-letter code: D-ribose pyranase (134 aa).

The active-site Proton donor is the histidine 20. Residues aspartate 28, histidine 99, and 123–125 (FSN) each bind substrate.

This sequence belongs to the RbsD / FucU family. RbsD subfamily. In terms of assembly, homodecamer.

It localises to the cytoplasm. It catalyses the reaction beta-D-ribopyranose = beta-D-ribofuranose. It participates in carbohydrate metabolism; D-ribose degradation; D-ribose 5-phosphate from beta-D-ribopyranose: step 1/2. In terms of biological role, catalyzes the interconversion of beta-pyran and beta-furan forms of D-ribose. In Staphylococcus carnosus (strain TM300), this protein is D-ribose pyranase.